The primary structure comprises 258 residues: Mediator of RNA polymerase II transcription subunit 7 (258 aa).

Disordered regions lie at residues 1–39 (MLPGFGATQTVSPFPNPPEYASAYTSDRIDNGSAPPPPH) and 202–243 (EKET…PPSV). Residues 203-217 (KETEEDEEMKEDDEE) show a composition bias toward acidic residues. Residues 220–229 (STSSSEGNQK) are compositionally biased toward polar residues.

It belongs to the Mediator complex subunit 7 family. In terms of assembly, component of the Mediator complex.

It is found in the nucleus. Component of the Mediator complex, a coactivator involved in the regulated transcription of nearly all RNA polymerase II-dependent genes. Mediator functions as a bridge to convey information from gene-specific regulatory proteins to the basal RNA polymerase II transcription machinery. Mediator is recruited to promoters by direct interactions with regulatory proteins and serves as a scaffold for the assembly of a functional preinitiation complex with RNA polymerase II and the general transcription factors. This chain is Mediator of RNA polymerase II transcription subunit 7 (let-49), found in Caenorhabditis briggsae.